Reading from the N-terminus, the 395-residue chain is ATP phosphoribosyltransferase regulatory subunit (395 aa).

It belongs to the class-II aminoacyl-tRNA synthetase family. HisZ subfamily. Heteromultimer composed of HisG and HisZ subunits.

The protein resides in the cytoplasm. It participates in amino-acid biosynthesis; L-histidine biosynthesis; L-histidine from 5-phospho-alpha-D-ribose 1-diphosphate: step 1/9. Functionally, required for the first step of histidine biosynthesis. May allow the feedback regulation of ATP phosphoribosyltransferase activity by histidine. In Pseudomonas syringae pv. syringae (strain B728a), this protein is ATP phosphoribosyltransferase regulatory subunit.